Consider the following 377-residue polypeptide: Glutamate 5-kinase (377 aa).

Residue lysine 20 participates in ATP binding. 3 residues coordinate substrate: serine 59, aspartate 146, and asparagine 158. ATP-binding positions include 178 to 179 (SD) and 220 to 226 (TGGMSTK). The PUA domain maps to 285–363 (RGTLTVDAGA…ADIEAVLGYR (79 aa)).

Belongs to the glutamate 5-kinase family.

Its subcellular location is the cytoplasm. The catalysed reaction is L-glutamate + ATP = L-glutamyl 5-phosphate + ADP. It functions in the pathway amino-acid biosynthesis; L-proline biosynthesis; L-glutamate 5-semialdehyde from L-glutamate: step 1/2. Its function is as follows. Catalyzes the transfer of a phosphate group to glutamate to form L-glutamate 5-phosphate. This Myxococcus xanthus (strain DK1622) protein is Glutamate 5-kinase.